We begin with the raw amino-acid sequence, 336 residues long: Dihydroorotate dehydrogenase (quinone) (336 aa).

FMN-binding positions include 62-66 (AGLDK) and Thr-86. Substrate is bound at residue Lys-66. Residue 111 to 115 (NRMGF) participates in substrate binding. FMN contacts are provided by Asn-139 and Asn-172. Position 172 (Asn-172) interacts with substrate. Ser-175 serves as the catalytic Nucleophile. A substrate-binding site is contributed by Asn-177. FMN contacts are provided by Lys-217 and Thr-245. Position 246–247 (246–247 (NT)) interacts with substrate. Residues Gly-268, Gly-297, and 318–319 (YS) contribute to the FMN site.

The protein belongs to the dihydroorotate dehydrogenase family. Type 2 subfamily. As to quaternary structure, monomer. FMN is required as a cofactor.

It is found in the cell membrane. The catalysed reaction is (S)-dihydroorotate + a quinone = orotate + a quinol. Its pathway is pyrimidine metabolism; UMP biosynthesis via de novo pathway; orotate from (S)-dihydroorotate (quinone route): step 1/1. Functionally, catalyzes the conversion of dihydroorotate to orotate with quinone as electron acceptor. This chain is Dihydroorotate dehydrogenase (quinone), found in Pectobacterium atrosepticum (strain SCRI 1043 / ATCC BAA-672) (Erwinia carotovora subsp. atroseptica).